Here is a 490-residue protein sequence, read N- to C-terminus: Membrane-bound lytic murein transglycosylase F (490 aa).

The first 32 residues, 1-32, serve as a signal peptide directing secretion; the sequence is MFALTAYRLRCAAWLLATGIFLLLAGCSEAKA. Residues 33-269 are non-LT domain; sequence PTALERVQKE…RLKDRYYGHV (237 aa). Residues 270-490 are LT domain; the sequence is DVLGYVGAYT…PDDDEGDGKL (221 aa). The active site involves E316. The tract at residues 467–490 is disordered; sequence AESGLHLPGVNKTRPDDDEGDGKL.

This sequence in the N-terminal section; belongs to the bacterial solute-binding protein 3 family. In the C-terminal section; belongs to the transglycosylase Slt family.

The protein resides in the cell outer membrane. It carries out the reaction Exolytic cleavage of the (1-&gt;4)-beta-glycosidic linkage between N-acetylmuramic acid (MurNAc) and N-acetylglucosamine (GlcNAc) residues in peptidoglycan, from either the reducing or the non-reducing ends of the peptidoglycan chains, with concomitant formation of a 1,6-anhydrobond in the MurNAc residue.. Murein-degrading enzyme that degrades murein glycan strands and insoluble, high-molecular weight murein sacculi, with the concomitant formation of a 1,6-anhydromuramoyl product. Lytic transglycosylases (LTs) play an integral role in the metabolism of the peptidoglycan (PG) sacculus. Their lytic action creates space within the PG sacculus to allow for its expansion as well as for the insertion of various structures such as secretion systems and flagella. The chain is Membrane-bound lytic murein transglycosylase F from Pseudomonas paraeruginosa (strain DSM 24068 / PA7) (Pseudomonas aeruginosa (strain PA7)).